Consider the following 629-residue polypeptide: Iron multicopper oxidase fer1 (629 aa).

The N-terminal stretch at 1 to 29 is a signal peptide; it reads MVAPQRRTVMPALGLLASSLCSLLLTANA. 2 Plastocyanin-like domains span residues 44 to 164 and 175 to 338; these read VNPD…IHPD and DDYT…TISY. N-linked (GlcNAc...) asparagine glycosylation is found at Asn58 and Asn69. Positions 91 and 93 each coordinate Cu cation. A glycan (N-linked (GlcNAc...) asparagine) is linked at Asn98. 2 residues coordinate Cu cation: His144 and His146. Residues Asn188, Asn222, Asn236, Asn253, Asn303, Asn331, and Asn398 are each glycosylated (N-linked (GlcNAc...) asparagine). The region spanning 401–537 is the Plastocyanin-like 3 domain; that stretch reads YVAPQVPALF…LASIFIEAPD (137 aa). Cu cation-binding residues include His452, His455, and His457. N-linked (GlcNAc...) asparagine glycosylation is present at Asn482. Residues His517, Cys518, His519, and His523 each coordinate Cu cation. The N-linked (GlcNAc...) asparagine glycan is linked to Asn569. The helical transmembrane segment at 592 to 612 threads the bilayer; sequence AIAAFTGCIITGLLGLATVVV.

This sequence belongs to the multicopper oxidase family. Cu cation serves as cofactor.

The protein resides in the cell membrane. Its function is as follows. Iron transport multicopper oxidase, which is required for Fe(2+) high affinity uptake. May be required to oxidize Fe(2+) and release it from the transporter. Essential component of copper-dependent iron transport. The protein is Iron multicopper oxidase fer1 of Mycosarcoma maydis (Corn smut fungus).